The chain runs to 212 residues: Protein GET1 (212 aa).

Over 1–4 the chain is Lumenal; the sequence is MASL. A helical membrane pass occupies residues 5 to 24; it reads LLFVLVIQIITYLINTIGAR. Residues 25 to 110 are Cytoplasmic-facing; the sequence is TIDSLLWLLY…SFDWTIKTVR (86 aa). Residues 75–99 are a coiled coil; that stretch reads AKLRRRHDKAMEEYDVKNKKLSALK. The helical transmembrane segment at 111–131 threads the bilayer; it reads WVSTTGVTVILQFWFSKSPIF. Residues 132-155 are Lumenal-facing; it reads DLPRGWLPWQVEWILSFPRAPLGT. Residues 156–172 traverse the membrane as a helical segment; that stretch reads VSIQVWGGACGTVIALV. Residues 173 to 212 lie on the Cytoplasmic side of the membrane; sequence GGAMGVAAPAFKKINQPRGEAQKMGTPRGSREQTPVRKTQ. The segment at 189–212 is disordered; the sequence is PRGEAQKMGTPRGSREQTPVRKTQ. A compositionally biased stretch (basic and acidic residues) spans 201 to 212; it reads GSREQTPVRKTQ.

This sequence belongs to the WRB/GET1 family. In terms of assembly, interacts with GET3.

Its subcellular location is the endoplasmic reticulum membrane. In terms of biological role, required for the post-translational delivery of tail-anchored (TA) proteins to the endoplasmic reticulum. Acts as a membrane receptor for soluble GET3, which recognizes and selectively binds the transmembrane domain of TA proteins in the cytosol. In Arthroderma otae (strain ATCC MYA-4605 / CBS 113480) (Microsporum canis), this protein is Protein GET1.